The sequence spans 107 residues: Large ribosomal subunit protein mL55 (107 aa).

The transit peptide at 1-16 (MLLKQLPQAVQQIRCI) directs the protein to the mitochondrion.

Belongs to the mitochondrion-specific ribosomal protein mL55 family. As to quaternary structure, component of the mitochondrial ribosome large subunit (39S) which comprises a 16S rRNA and about 50 distinct proteins. In terms of tissue distribution, ubiquitously expressed (at protein level).

It is found in the mitochondrion. Its function is as follows. Involved in mitochondrial biogenesis and G2/M phase cell cycle progression. The chain is Large ribosomal subunit protein mL55 (mRpL55) from Drosophila melanogaster (Fruit fly).